Here is a 444-residue protein sequence, read N- to C-terminus: E1B 55 kDa protein (444 aa).

A disordered region spans residues 1-42; it reads MEQDSDLESGRATNQRPPRVRVRGAGVRGRGRVRRRALSEGQ. Ser438 and Ser439 each carry phosphoserine.

It belongs to the adenoviridae E1B 55 kDa protein family. In terms of assembly, interacts with host PML-4 and PML-5; this interaction promotes efficient subnuclear targeting of E1B-55K to PML nuclear bodies. Interacts with E4-ORF3 protein. Interacts with E4-ORF6 protein.

The protein resides in the host nucleus. The protein localises to the host cytoplasm. In terms of biological role, plays a major role to prevent cellular inhibition of viral genome replication. Assembles an SCF-like E3 ubiquitin ligase complex based on the cellular proteins ELOB, ELOC, CUL5 and RBX1, in cooperation with viral E4orf6. This viral RING-type ligase ubiquitinates cellular substrates and targets them to proteasomal degradation: TP53/p53, LIG4, MRE11-RAD50-NBS1 (MRN) complex, ITGA3, DAXX and BLM. E1B-55K probably acts as the substrate-specific adapter of the SCF-like E3 ubiquitin ligase complex. Degradation of host TP53/p53 activity is essential for preventing E1A-induced TP53 accumulation that would otherwise lead to cell apoptosis and growth arrest. E1B-55K also inactivates TP53 transcription-factor activity by binding its transactivation domain. E1B-55K also functions as a SUMO1 E3 ligase for TP53 which causes the latter to be sequestered in promyelocytic leukemia (PML) nuclear bodies thereby contributing to maximal inhibition of TP53 function. This is E1B 55 kDa protein from Canis lupus familiaris (Dog).